A 198-amino-acid chain; its full sequence is Protein GrpE (198 aa).

The protein belongs to the GrpE family. As to quaternary structure, homodimer.

Its subcellular location is the cytoplasm. Functionally, participates actively in the response to hyperosmotic and heat shock by preventing the aggregation of stress-denatured proteins, in association with DnaK and GrpE. It is the nucleotide exchange factor for DnaK and may function as a thermosensor. Unfolded proteins bind initially to DnaJ; upon interaction with the DnaJ-bound protein, DnaK hydrolyzes its bound ATP, resulting in the formation of a stable complex. GrpE releases ADP from DnaK; ATP binding to DnaK triggers the release of the substrate protein, thus completing the reaction cycle. Several rounds of ATP-dependent interactions between DnaJ, DnaK and GrpE are required for fully efficient folding. The chain is Protein GrpE from Actinobacillus pleuropneumoniae serotype 5b (strain L20).